Reading from the N-terminus, the 310-residue chain is tRNA pseudouridine synthase B (310 aa).

Asp47 functions as the Nucleophile in the catalytic mechanism.

Belongs to the pseudouridine synthase TruB family. Type 1 subfamily.

It catalyses the reaction uridine(55) in tRNA = pseudouridine(55) in tRNA. Functionally, responsible for synthesis of pseudouridine from uracil-55 in the psi GC loop of transfer RNAs. This Caulobacter sp. (strain K31) protein is tRNA pseudouridine synthase B.